We begin with the raw amino-acid sequence, 495 residues long: UDP-N-acetylmuramoyl-L-alanyl-D-glutamate--2,6-diaminopimelate ligase (495 aa).

UDP-N-acetyl-alpha-D-muramoyl-L-alanyl-D-glutamate contacts are provided by residues Leu-27, Ser-29, and 44–46; that span reads HQT. 116–122 is an ATP binding site; it reads GTNGKTT. Residues Asn-157, 158-159, Ser-185, Gln-191, and Arg-193 each bind UDP-N-acetyl-alpha-D-muramoyl-L-alanyl-D-glutamate; that span reads TT. Lys-225 is modified (N6-carboxylysine). Meso-2,6-diaminopimelate is bound by residues Arg-390, 414-417, Gly-465, and Glu-469; that span reads DNPR. The short motif at 414-417 is the Meso-diaminopimelate recognition motif element; it reads DNPR.

This sequence belongs to the MurCDEF family. MurE subfamily. The cofactor is Mg(2+). Post-translationally, carboxylation is probably crucial for Mg(2+) binding and, consequently, for the gamma-phosphate positioning of ATP.

It localises to the cytoplasm. The enzyme catalyses UDP-N-acetyl-alpha-D-muramoyl-L-alanyl-D-glutamate + meso-2,6-diaminopimelate + ATP = UDP-N-acetyl-alpha-D-muramoyl-L-alanyl-gamma-D-glutamyl-meso-2,6-diaminopimelate + ADP + phosphate + H(+). It functions in the pathway cell wall biogenesis; peptidoglycan biosynthesis. Its function is as follows. Catalyzes the addition of meso-diaminopimelic acid to the nucleotide precursor UDP-N-acetylmuramoyl-L-alanyl-D-glutamate (UMAG) in the biosynthesis of bacterial cell-wall peptidoglycan. The chain is UDP-N-acetylmuramoyl-L-alanyl-D-glutamate--2,6-diaminopimelate ligase from Photorhabdus laumondii subsp. laumondii (strain DSM 15139 / CIP 105565 / TT01) (Photorhabdus luminescens subsp. laumondii).